Here is a 443-residue protein sequence, read N- to C-terminus: MNKAIKVSLYISFVLIICALSKNIMMLNTSDFGRAIKPLIEDIPAFTYDLPLLYKLKGHIDSIDSYEYISSYSYILYTYVLFISIFTEYLDARVLSLFLKVIYIYSLYAIFTSYIKTERYVTLFTFFILAFLMCSSSTLSMFASFYQEQIVIIFLPFLVYSLTCKNNKSMLLLFFSLLIISTAKNQFILTPLIVYSYYIFFDRHKLIIKSVICVVCLLASIFAISYSKGVVELNKYHATYFGSYLYMKNNGYKMPSYVDDKCVGLDAWGNKFDISFGATPTEVGTECFESHKDETFSNALFLLVSKPSTIFKLPFDDGVMSQYKENYFHVYKKLHVIYGESNILTTITNIKDNIFKNIRFISLLLFFIASIFIRNNKIKASLFVVSLFGISQFYVSFFGEGYRDLSKHLFGMYFSFDLCLYITVVFLIYKIIQRNQDNSDVKH.

A run of 10 helical transmembrane segments spans residues 7–29 (VSLY…MLNT), 68–87 (YISS…SIFT), 94–111 (VLSL…YAIF), 121–143 (VTLF…SMFA), 150–164 (IVII…SLTC), 179–201 (IIST…YIFF), 206–225 (LIIK…FAIS), 358–375 (IRFI…FIRN), 382–399 (LFVV…SFFG), and 409–431 (LFGM…IYKI).

It is found in the cell membrane. This is an uncharacterized protein from Escherichia coli (strain K12).